The primary structure comprises 167 residues: MASPRTITIMALSVALGLFFVFMGTIKLTPRLSKDAYSEMKRAYKSYVRALPLLKKMGINSILLRKSIGALEVACGIVMTLVPGRPKDVANFFLLLLVLAVLFFHQLVGDPLKRYAHALVFGILLTCRLLIARKPEDRSSEKKALPESAEEQPSLYEKAPQGKVKVS.

Over 1–5 (MASPR) the chain is Cytoplasmic. The helical transmembrane segment at 6–26 (TITIMALSVALGLFFVFMGTI) threads the bilayer. Residues 27 to 61 (KLTPRLSKDAYSEMKRAYKSYVRALPLLKKMGINS) lie on the Lumenal side of the membrane. The segment at 43–54 (AYKSYVRALPLL) is interaction with NGFR. Residues 62–82 (ILLRKSIGALEVACGIVMTLV) form a helical membrane-spanning segment. Residues 83-88 (PGRPKD) are Cytoplasmic-facing. Residues 89–109 (VANFFLLLLVLAVLFFHQLVG) traverse the membrane as a helical segment. Topologically, residues 110–114 (DPLKR) are lumenal. Residues 115-132 (YAHALVFGILLTCRLLIA) form a helical membrane-spanning segment. Over 133–167 (RKPEDRSSEKKALPESAEEQPSLYEKAPQGKVKVS) the chain is Cytoplasmic. The span at 135–145 (PEDRSSEKKAL) shows a compositional bias: basic and acidic residues. The interval 135-167 (PEDRSSEKKALPESAEEQPSLYEKAPQGKVKVS) is disordered.

This sequence belongs to the DoxX family. As to quaternary structure, may interact with NGFR. Interacts with RPN1, RPN2 and CANX. In terms of tissue distribution, brain (at protein level). Expressed in the spinal cord dorsal horn (at protein level).

It localises to the peroxisome membrane. It is found in the cytoplasmic vesicle. The protein localises to the endoplasmic reticulum membrane. In terms of biological role, molecular chaperone which mediates the proper assembly and functional expression of the nicotinic acetylcholine receptors (nAChRs) throughout the brain. Essential for the proper folding, assembly, function and surface trafficking of alpha-7 (CHRNA7), alpha-4-beta-2, alpha-3-beta-2 and alpha-3-beta-4 receptors. Stably associates with ribophorin-1 (RPN1) and ribophorin-2 (RPN2) (components of the oligosaccharyl transferase (OST) complex) and with calnexin (CANX), both of which are critical for NACHO-mediated effects on CHRNA7 assembly and function. Facilitates the proper folding and assembly of alpha-6-beta-2 and alpha-6-beta-2-beta-3 receptors and acts at early stages of the nAChRs subunit assembly. Promotes the expression of the alpha-4(2):beta-2(3) stoichiometric form over the alpha-4(3):beta-2(2) form. In Mus musculus (Mouse), this protein is Novel acetylcholine receptor chaperone.